The chain runs to 71 residues: Large ribosomal subunit protein uL30 (71 aa).

The protein belongs to the universal ribosomal protein uL30 family. As to quaternary structure, part of the 50S ribosomal subunit.

The protein is Large ribosomal subunit protein uL30 of Mycobacterium leprae (strain TN).